Reading from the N-terminus, the 50-residue chain is Ornatin-E (50 aa).

Positions 42–44 match the Cell attachment site motif; sequence RGD.

This sequence belongs to the ornatin family.

It localises to the secreted. In terms of biological role, potent inhibitor of fibrinogen interaction with platelet receptors expressed on glycoprotein IIb-IIIa complex. May prevent blood from clotting during either feeding and/or storage of ingested blood. This is Ornatin-E from Placobdella ornata (Turtle leech).